The sequence spans 347 residues: Probable replication factor C subunit 3 (347 aa).

The protein belongs to the activator 1 small subunits family. Heteropentamer of various rfc subunits that forms a complex (RFC) with PCNA in the presence of ATP.

The protein resides in the nucleus. Its function is as follows. The elongation of primed DNA templates by DNA polymerase delta and epsilon requires the action of the accessory proteins PCNA and activator 1. The chain is Probable replication factor C subunit 3 (rfc3) from Dictyostelium discoideum (Social amoeba).